The primary structure comprises 443 residues: Transcriptional adapter 2-alpha (443 aa).

Residue serine 6 is modified to Phosphoserine. A ZZ-type zinc finger spans residues 12-69 (SDKPPCRGCSSYLMEPYIKCAECGPPPFFLCLQCFTRGFEYKKHQSDHTYEIMTSDFP). Positions 17, 20, 31, 34, 42, 45, 55, and 59 each coordinate Zn(2+). The region spanning 70-122 (VLDPSWTAQEEMALLEAVMDCGFGNWQDVANQMCTKTKEECEKHYMKHFINNP) is the SANT domain. Residues lysine 132 and lysine 138 each participate in a glycyl lysine isopeptide (Lys-Gly) (interchain with G-Cter in SUMO2) cross-link. Positions 347–359 (LSPSVPMTSNSGR) are enriched in polar residues. The segment at 347-372 (LSPSVPMTSNSGRRSAPPLNLTGLPG) is disordered. Positions 356–443 (NSGRRSAPPL…LIREGYITKA (88 aa)) constitute an SWIRM domain. A DNA-binding region spans residues 426–435 (KTRKIYDFLI).

As to quaternary structure, interacts with GCN5 and NR3C1. Associated with the P/CAF protein in the PCAF complex. Component of the PCAF complex, at least composed of TADA2L/ADA2, TADA3L/ADA3, TAF5L/PAF65-beta, TAF6L/PAF65-alpha, TAF10/TAFII30, TAF12/TAFII20, TAF9/TAFII31 and TRRAP. Component of the ADA2A-containing complex (ATAC), composed of KAT14, KAT2A, TADA2L, TADA3L, ZZ3, MBIP, WDR5, YEATS2, CCDC101 and DR1. Interacts with CCDC134.

Its subcellular location is the nucleus. It localises to the chromosome. Component of the ATAC complex, a complex with histone acetyltransferase activity on histones H3 and H4. Required for the function of some acidic activation domains, which activate transcription from a distant site. Binds double-stranded DNA. Binds dinucleosomes, probably at the linker region between neighboring nucleosomes. Plays a role in chromatin remodeling. May promote TP53/p53 'Lys-321' acetylation, leading to reduced TP53 stability and transcriptional activity. May also promote XRCC6 acetylation thus facilitating cell apoptosis in response to DNA damage. This chain is Transcriptional adapter 2-alpha (TADA2A), found in Bos taurus (Bovine).